The sequence spans 315 residues: MARIAYLGPEGTFTQAALLEIAAAGLVPGHDDGGAQPLPVESTPAALDAVRTGAAEFACVPIENSIDGSLAPTLDSLAIGSPLQVFAETTLDVAFSIVVRPGVGAADVRTLAAFPVAAAQVRQWLTAHLPSVELHPAYSNADAARQVAEGQVDAAVTSPLAAAHWALQSLADGVVDESNARTRFLLIGVPGPPPPRTGTDRTSVVLRIANVPGALLDALTEFGMRGIDLTRIESRPTRTGLGTYMFFVDCVGHIADDAVAEALKALHRRCADVRYLGSWPTGQTYAGQPPPADEAAIWLQQLREGKPEASPGPPL.

One can recognise a Prephenate dehydratase domain in the interval 3–189; it reads RIAYLGPEGT…ARTRFLLIGV (187 aa). Residues 203–280 enclose the ACT domain; that stretch reads SVVLRIANVP…ADVRYLGSWP (78 aa).

Homodimer.

The enzyme catalyses prephenate + H(+) = 3-phenylpyruvate + CO2 + H2O. The protein operates within amino-acid biosynthesis; L-phenylalanine biosynthesis; phenylpyruvate from prephenate: step 1/1. The sequence is that of Prephenate dehydratase (pheA) from Mycobacterium marinum (strain ATCC BAA-535 / M).